The following is a 619-amino-acid chain: uncharacterized protein (619 aa).

The signal sequence occupies residues 1–21 (MKKLIAIIAVAAVVIAGFVFT).

This is an uncharacterized protein from Archaeoglobus fulgidus (strain ATCC 49558 / DSM 4304 / JCM 9628 / NBRC 100126 / VC-16).